A 482-amino-acid chain; its full sequence is UDP-glucose 6-dehydrogenase 2 (482 aa).

NAD(+)-binding positions include G8–G13, D33, R38, V86–T90, S127–T128, and E163. Substrate is bound by residues E159–E163, K218–L225, and R258–G271. Catalysis depends on C274, which acts as the Nucleophile. C274–K277 contacts NAD(+). Position 336–337 (F336–K337) interacts with substrate. R344 lines the NAD(+) pocket. S395 carries the post-translational modification Phosphoserine. R449 lines the substrate pocket.

This sequence belongs to the UDP-glucose/GDP-mannose dehydrogenase family.

It catalyses the reaction UDP-alpha-D-glucose + 2 NAD(+) + H2O = UDP-alpha-D-glucuronate + 2 NADH + 3 H(+). The protein operates within nucleotide-sugar biosynthesis; UDP-alpha-D-glucuronate biosynthesis; UDP-alpha-D-glucuronate from UDP-alpha-D-glucose: step 1/1. Functionally, involved in the biosynthesis of UDP-glucuronic acid (UDP-GlcA), providing nucleotide sugars for cell-wall polymers. The polypeptide is UDP-glucose 6-dehydrogenase 2 (UGD2) (Oryza sativa subsp. japonica (Rice)).